Here is a 126-residue protein sequence, read N- to C-terminus: Aspartate 1-decarboxylase (126 aa).

The Schiff-base intermediate with substrate; via pyruvic acid role is filled by S25. S25 carries the post-translational modification Pyruvic acid (Ser). T57 lines the substrate pocket. Y58 functions as the Proton donor in the catalytic mechanism. Substrate is bound at residue 73–75 (GAA).

Belongs to the PanD family. In terms of assembly, heterooctamer of four alpha and four beta subunits. It depends on pyruvate as a cofactor. In terms of processing, is synthesized initially as an inactive proenzyme, which is activated by self-cleavage at a specific serine bond to produce a beta-subunit with a hydroxyl group at its C-terminus and an alpha-subunit with a pyruvoyl group at its N-terminus.

It localises to the cytoplasm. The enzyme catalyses L-aspartate + H(+) = beta-alanine + CO2. It participates in cofactor biosynthesis; (R)-pantothenate biosynthesis; beta-alanine from L-aspartate: step 1/1. In terms of biological role, catalyzes the pyruvoyl-dependent decarboxylation of aspartate to produce beta-alanine. This chain is Aspartate 1-decarboxylase, found in Psychrobacter arcticus (strain DSM 17307 / VKM B-2377 / 273-4).